The chain runs to 540 residues: Chaperonin GroEL (540 aa).

ATP contacts are provided by residues 29–32, 86–90, glycine 413, 476–478, and aspartate 492; these read TLGP, DGTTT, and NAA.

Belongs to the chaperonin (HSP60) family. Forms a cylinder of 14 subunits composed of two heptameric rings stacked back-to-back. Interacts with the co-chaperonin GroES.

The protein localises to the cytoplasm. It carries out the reaction ATP + H2O + a folded polypeptide = ADP + phosphate + an unfolded polypeptide.. Its function is as follows. Together with its co-chaperonin GroES, plays an essential role in assisting protein folding. The GroEL-GroES system forms a nano-cage that allows encapsulation of the non-native substrate proteins and provides a physical environment optimized to promote and accelerate protein folding. The chain is Chaperonin GroEL from Streptococcus pneumoniae (strain P1031).